The sequence spans 334 residues: Leukocyte cell-derived chemotaxin 1 (334 aa).

The chain crosses the membrane as a helical span at residues 46–66; it reads VVLISGAVLLLFGAIGAFYFW. The BRICHOS domain maps to 105 to 201; it reads GSGAEEAIEV…LCGDLPIFWL (97 aa). An intrachain disulfide couples C132 to C193. Positions 211-214 are excised as a propeptide; it reads RERR. A disordered region spans residues 212–270; the sequence is ERREVVRNSAPSTTRRPHSEPRGNAGPGRLSNGTRPNVQDDAEPFNPDNPYHQQEGESM. Residue N243 is glycosylated (N-linked (GlcNAc...) asparagine). 4 disulfide bridges follow: C282–C286, C283–C323, C293–C317, and C297–C313.

This sequence belongs to the chondromodulin-1 family. In terms of processing, after cleavage, the post-translationally modified ChM-I is secreted as a glycoprotein. As to expression, detected in the four cardiac valves, valvular interstitial cells and extracellular matrix (at protein level).

It localises to the secreted. The protein resides in the extracellular space. It is found in the extracellular matrix. Its subcellular location is the endomembrane system. In terms of biological role, bifunctional growth regulator that stimulates the growth of cultured chondrocytes in the presence of basic fibroblast growth factor (FGF) but inhibits the growth of cultured vascular endothelial cells. May contribute to the rapid growth of cartilage and vascular invasion prior to the replacement of cartilage by bone during endochondral bone development. Inhibits in vitro tube formation and mobilization of endothelial cells. Plays a role as antiangiogenic factor in cardiac valves to suppress neovascularization. The sequence is that of Leukocyte cell-derived chemotaxin 1 from Mus musculus (Mouse).